A 203-amino-acid chain; its full sequence is Protein-methionine-sulfoxide reductase heme-binding subunit MsrQ (203 aa).

The next 5 membrane-spanning stretches (helical) occupy residues 13–33 (IAIW…INLG), 79–99 (LLGL…SILE), 116–136 (PYLT…LTST), 147–167 (WQKL…HYLW), and 169–189 (VKTL…LLLL).

The protein belongs to the MsrQ family. As to quaternary structure, heterodimer of a catalytic subunit (MsrP) and a heme-binding subunit (MsrQ). It depends on FMN as a cofactor. Requires heme b as cofactor.

The protein resides in the cell inner membrane. Functionally, part of the MsrPQ system that repairs oxidized periplasmic proteins containing methionine sulfoxide residues (Met-O), using respiratory chain electrons. Thus protects these proteins from oxidative-stress damage caused by reactive species of oxygen and chlorine generated by the host defense mechanisms. MsrPQ is essential for the maintenance of envelope integrity under bleach stress, rescuing a wide series of structurally unrelated periplasmic proteins from methionine oxidation. MsrQ provides electrons for reduction to the reductase catalytic subunit MsrP, using the quinone pool of the respiratory chain. The chain is Protein-methionine-sulfoxide reductase heme-binding subunit MsrQ from Yersinia pseudotuberculosis serotype O:1b (strain IP 31758).